An 89-amino-acid polypeptide reads, in one-letter code: Putative membrane protein insertion efficiency factor (89 aa).

The disordered stretch occupies residues 68–89 (VPPPNSDARNAPHEAEASSHRL). Positions 77–89 (NAPHEAEASSHRL) are enriched in basic and acidic residues.

Belongs to the UPF0161 family.

The protein resides in the cell inner membrane. Functionally, could be involved in insertion of integral membrane proteins into the membrane. In Burkholderia mallei (strain SAVP1), this protein is Putative membrane protein insertion efficiency factor.